The chain runs to 90 residues: uncharacterized protein (90 aa).

An Isoglutamyl lysine isopeptide (Lys-Gln) (interchain with Q-Cter in protein Pup) cross-link involves residue K88.

This is an uncharacterized protein from Mycolicibacterium smegmatis (strain ATCC 700084 / mc(2)155) (Mycobacterium smegmatis).